The following is a 383-amino-acid chain: GTP-binding protein 10 homolog (383 aa).

Residues 22–157 (PTFLDTLRLA…RTVNLDLKLI (136 aa)) enclose the Obg domain. The region spanning 158 to 353 (ADVGLVGFPN…VKSQLRRTLV (196 aa)) is the OBG-type G domain. GTP contacts are provided by residues 164-171 (GFPNAGKS), 211-215 (DLPGL), and 287-290 (NKMD).

It belongs to the TRAFAC class OBG-HflX-like GTPase superfamily. OBG GTPase family.

It localises to the nucleus. Its subcellular location is the nucleolus. In terms of biological role, may be involved in the ribosome maturation process. This chain is GTP-binding protein 10 homolog, found in Drosophila melanogaster (Fruit fly).